Reading from the N-terminus, the 209-residue chain is Cytidylate kinase (209 aa).

7–15 (GVAASGKSS) provides a ligand contact to ATP.

Belongs to the cytidylate kinase family. Type 1 subfamily.

The protein localises to the cytoplasm. The catalysed reaction is CMP + ATP = CDP + ADP. It carries out the reaction dCMP + ATP = dCDP + ADP. The polypeptide is Cytidylate kinase (Deinococcus geothermalis (strain DSM 11300 / CIP 105573 / AG-3a)).